Reading from the N-terminus, the 375-residue chain is Alcohol dehydrogenase 1A (375 aa).

Serine 2 carries the N-acetylserine modification. A Phosphoserine modification is found at serine 23. Tyrosine 35 carries the post-translational modification Phosphotyrosine. Zn(2+) is bound at residue cysteine 47. 48 to 52 (GTDDH) lines the NAD(+) pocket. Residues histidine 68, cysteine 98, cysteine 101, cysteine 104, cysteine 112, and cysteine 175 each contribute to the Zn(2+) site. Residues 200-205 (GLGGVG), aspartate 224, lysine 229, isoleucine 270, 293-295 (VGV), 318-320 (AVY), and arginine 370 contribute to the NAD(+) site.

The protein belongs to the zinc-containing alcohol dehydrogenase family. In terms of assembly, dimer of identical or heterodimer of closely related subunits alpha, beta, or gamma that are encoded by genes ADH1A, ADH1B, and ADH1C, respectively. The cofactor is Zn(2+).

Its subcellular location is the cytoplasm. The catalysed reaction is a primary alcohol + NAD(+) = an aldehyde + NADH + H(+). It carries out the reaction a secondary alcohol + NAD(+) = a ketone + NADH + H(+). It catalyses the reaction butan-1-ol + NAD(+) = butanal + NADH + H(+). The enzyme catalyses 1-propanol + NAD(+) = propanal + NADH + H(+). The catalysed reaction is propan-2-ol + NAD(+) = acetone + NADH + H(+). In terms of biological role, alcohol dehydrogenase. Oxidizes primary as well as secondary alcohols. Ethanol is a very poor substrate. In Macaca mulatta (Rhesus macaque), this protein is Alcohol dehydrogenase 1A (ADH1A).